A 139-amino-acid chain; its full sequence is ATP synthase epsilon chain (139 aa).

Belongs to the ATPase epsilon chain family. In terms of assembly, F-type ATPases have 2 components, CF(1) - the catalytic core - and CF(0) - the membrane proton channel. CF(1) has five subunits: alpha(3), beta(3), gamma(1), delta(1), epsilon(1). CF(0) has three main subunits: a, b and c.

The protein resides in the cell inner membrane. Produces ATP from ADP in the presence of a proton gradient across the membrane. The polypeptide is ATP synthase epsilon chain (Pseudomonas putida (strain ATCC 700007 / DSM 6899 / JCM 31910 / BCRC 17059 / LMG 24140 / F1)).